Reading from the N-terminus, the 256-residue chain is Thiazole synthase (256 aa).

Lysine 96 functions as the Schiff-base intermediate with DXP in the catalytic mechanism. 1-deoxy-D-xylulose 5-phosphate-binding positions include glycine 157, 183 to 184, and 205 to 206; these read AG and NT.

This sequence belongs to the ThiG family. As to quaternary structure, homotetramer. Forms heterodimers with either ThiH or ThiS.

It localises to the cytoplasm. It catalyses the reaction [ThiS sulfur-carrier protein]-C-terminal-Gly-aminoethanethioate + 2-iminoacetate + 1-deoxy-D-xylulose 5-phosphate = [ThiS sulfur-carrier protein]-C-terminal Gly-Gly + 2-[(2R,5Z)-2-carboxy-4-methylthiazol-5(2H)-ylidene]ethyl phosphate + 2 H2O + H(+). The protein operates within cofactor biosynthesis; thiamine diphosphate biosynthesis. Catalyzes the rearrangement of 1-deoxy-D-xylulose 5-phosphate (DXP) to produce the thiazole phosphate moiety of thiamine. Sulfur is provided by the thiocarboxylate moiety of the carrier protein ThiS. In vitro, sulfur can be provided by H(2)S. This Bacillus anthracis protein is Thiazole synthase.